A 93-amino-acid chain; its full sequence is Small ribosomal subunit protein uS19 (93 aa).

This sequence belongs to the universal ribosomal protein uS19 family.

Functionally, protein S19 forms a complex with S13 that binds strongly to the 16S ribosomal RNA. In Ehrlichia chaffeensis (strain ATCC CRL-10679 / Arkansas), this protein is Small ribosomal subunit protein uS19.